The sequence spans 504 residues: Cytochrome P450 monooxygenase braC (504 aa).

Residues 4-24 (LYLPTIWASTLTAATIFIVAV) form a helical membrane-spanning segment. A heme-binding site is contributed by cysteine 448.

The protein belongs to the cytochrome P450 family. Heme serves as cofactor.

Its subcellular location is the membrane. It participates in secondary metabolite biosynthesis. In terms of biological role, cytochrome P450 monooxygenase; part of the gene cluster that mediates the biosynthesis of the brasilane terpene glycosides brasilane D and E. The biosynthesis starts with the activity of the terpene cyclase braA that converts farnesyl pyrophosphate into the sesquiterpene alcohol trichobrasilenol. Subsequently, trichobrasilenol is glycosylated by the O-glycosyltransferase braB putatively using UDP-GlcNAc as sugar donor to yield brasilane A. The latter then undergoes two rounds of oxidation performed by the cytochrome P450 monooxygenase braC. In the first round braC hydroxylates C-12 forming brasilane D, which serves as substrate in the second round to establish the epoxide at the bond between C-5 and C-10 and oxidize the alcohol at C-12 to an aldehyde leading to the final product brasilane E. This Annulohypoxylon truncatum (Hypoxylon truncatum) protein is Cytochrome P450 monooxygenase braC.